A 291-amino-acid polypeptide reads, in one-letter code: Lipoyl synthase (291 aa).

Residues cysteine 43, cysteine 48, cysteine 54, cysteine 69, cysteine 73, cysteine 76, and serine 280 each contribute to the [4Fe-4S] cluster site. One can recognise a Radical SAM core domain in the interval 55 to 269 (FSSRTATFLI…AAYGRARGIP (215 aa)).

The protein belongs to the radical SAM superfamily. Lipoyl synthase family. The cofactor is [4Fe-4S] cluster.

The protein resides in the cytoplasm. The catalysed reaction is [[Fe-S] cluster scaffold protein carrying a second [4Fe-4S](2+) cluster] + N(6)-octanoyl-L-lysyl-[protein] + 2 oxidized [2Fe-2S]-[ferredoxin] + 2 S-adenosyl-L-methionine + 4 H(+) = [[Fe-S] cluster scaffold protein] + N(6)-[(R)-dihydrolipoyl]-L-lysyl-[protein] + 4 Fe(3+) + 2 hydrogen sulfide + 2 5'-deoxyadenosine + 2 L-methionine + 2 reduced [2Fe-2S]-[ferredoxin]. It participates in protein modification; protein lipoylation via endogenous pathway; protein N(6)-(lipoyl)lysine from octanoyl-[acyl-carrier-protein]: step 2/2. Catalyzes the radical-mediated insertion of two sulfur atoms into the C-6 and C-8 positions of the octanoyl moiety bound to the lipoyl domains of lipoate-dependent enzymes, thereby converting the octanoylated domains into lipoylated derivatives. In Oleidesulfovibrio alaskensis (strain ATCC BAA-1058 / DSM 17464 / G20) (Desulfovibrio alaskensis), this protein is Lipoyl synthase.